We begin with the raw amino-acid sequence, 141 residues long: Nucleoside diphosphate kinase (141 aa).

6 residues coordinate ATP: lysine 9, phenylalanine 57, arginine 85, threonine 91, arginine 102, and asparagine 112. Histidine 115 serves as the catalytic Pros-phosphohistidine intermediate.

Belongs to the NDK family. In terms of assembly, homotetramer. Mg(2+) is required as a cofactor.

It localises to the cytoplasm. It carries out the reaction a 2'-deoxyribonucleoside 5'-diphosphate + ATP = a 2'-deoxyribonucleoside 5'-triphosphate + ADP. The enzyme catalyses a ribonucleoside 5'-diphosphate + ATP = a ribonucleoside 5'-triphosphate + ADP. Functionally, major role in the synthesis of nucleoside triphosphates other than ATP. The ATP gamma phosphate is transferred to the NDP beta phosphate via a ping-pong mechanism, using a phosphorylated active-site intermediate. The protein is Nucleoside diphosphate kinase of Chlamydia trachomatis serovar A (strain ATCC VR-571B / DSM 19440 / HAR-13).